A 187-amino-acid chain; its full sequence is Large ribosomal subunit protein bL9 (187 aa).

The segment at 168–187 (EEAPAEEDVAAEETSEAAEA) is disordered.

Belongs to the bacterial ribosomal protein bL9 family.

Its function is as follows. Binds to the 23S rRNA. The protein is Large ribosomal subunit protein bL9 of Paramagnetospirillum magneticum (strain ATCC 700264 / AMB-1) (Magnetospirillum magneticum).